The chain runs to 332 residues: 2,3-diketo-L-gulonate reductase (332 aa).

H44 acts as the Proton donor in catalysis. Residues 168-174, 224-225, and 304-306 each bind NAD(+); these read ITMVDMS, WK, and GHE.

It belongs to the LDH2/MDH2 oxidoreductase family. DlgD subfamily. Homodimer.

The protein resides in the cytoplasm. It catalyses the reaction 3-dehydro-L-gulonate + NAD(+) = 2,3-dioxo-L-gulonate + NADH + H(+). The enzyme catalyses 3-dehydro-L-gulonate + NADP(+) = 2,3-dioxo-L-gulonate + NADPH + H(+). In terms of biological role, catalyzes the reduction of 2,3-diketo-L-gulonate in the presence of NADH, to form 3-keto-L-gulonate. This Shigella boydii serotype 4 (strain Sb227) protein is 2,3-diketo-L-gulonate reductase.